Here is a 55-residue protein sequence, read N- to C-terminus: Spermatid nuclear transition protein 1 (55 aa).

Basic residues predominate over residues 1–42 (MSTSRKLKSQGMRRGKNRTPHKGVKRSGSKRKYRKSSLKSRK). The tract at residues 1 to 55 (MSTSRKLKSQGMRRGKNRTPHKGVKRSGSKRKYRKSSLKSRKRCDDANRNLRSHL) is disordered. 4 positions are modified to phosphoserine: serine 9, serine 36, serine 37, and serine 40.

This sequence belongs to the nuclear transition protein 1 family. Testis.

The protein resides in the nucleus. Its subcellular location is the chromosome. Its function is as follows. Plays a key role in the replacement of histones to protamine in the elongating spermatids of mammals. In condensing spermatids, loaded onto the nucleosomes, where it promotes the recruitment and processing of protamines, which are responsible for histone eviction. This chain is Spermatid nuclear transition protein 1 (TNP1), found in Bos taurus (Bovine).